Reading from the N-terminus, the 244-residue chain is Methylthioribulose-1-phosphate dehydratase (244 aa).

Substrate is bound at residue cysteine 89. Zn(2+)-binding residues include histidine 107 and histidine 109. The Proton donor/acceptor role is filled by glutamate 130. Residue histidine 192 coordinates Zn(2+).

The protein belongs to the aldolase class II family. MtnB subfamily. The cofactor is Zn(2+).

The protein localises to the cytoplasm. It carries out the reaction 5-(methylsulfanyl)-D-ribulose 1-phosphate = 5-methylsulfanyl-2,3-dioxopentyl phosphate + H2O. It functions in the pathway amino-acid biosynthesis; L-methionine biosynthesis via salvage pathway; L-methionine from S-methyl-5-thio-alpha-D-ribose 1-phosphate: step 2/6. Its function is as follows. Catalyzes the dehydration of methylthioribulose-1-phosphate (MTRu-1-P) into 2,3-diketo-5-methylthiopentyl-1-phosphate (DK-MTP-1-P). The polypeptide is Methylthioribulose-1-phosphate dehydratase (Saccharomyces cerevisiae (strain ATCC 204508 / S288c) (Baker's yeast)).